The sequence spans 458 residues: UDP-N-acetylmuramoylalanine--D-glutamate ligase (458 aa).

118 to 124 provides a ligand contact to ATP; the sequence is GTNGKTT.

Belongs to the MurCDEF family.

It localises to the cytoplasm. The enzyme catalyses UDP-N-acetyl-alpha-D-muramoyl-L-alanine + D-glutamate + ATP = UDP-N-acetyl-alpha-D-muramoyl-L-alanyl-D-glutamate + ADP + phosphate + H(+). Its pathway is cell wall biogenesis; peptidoglycan biosynthesis. Cell wall formation. Catalyzes the addition of glutamate to the nucleotide precursor UDP-N-acetylmuramoyl-L-alanine (UMA). This Ligilactobacillus salivarius (strain UCC118) (Lactobacillus salivarius) protein is UDP-N-acetylmuramoylalanine--D-glutamate ligase.